We begin with the raw amino-acid sequence, 289 residues long: MAMGSGGGAGSEQEDTVLFRRGTGQSDDSDIWDDTALIKAYDKAVASFKHALKNGDMCETSDKPKGTARRKPAKKNKNQKKNATAPLKQWKAGDKCSAVWSEDGCVYPATITSVDLKRETCVVVYTGYGNKEEQNLSDLLSPTCEVANNTEQNTQENESQVSTDDSEHSSRSLRSKAHSKSKAAPWTSFLPPPPPVPGAGLGPGKPGLRFSGPPPPPPPPPPFLPCWMPPFPSGPPIIPPPPPISPDCLDDTDALGSMLISWYMSGYHTGYYMGFRQNKKEGKKCSHTN.

Positions 1–10 (MAMGSGGGAG) are enriched in gly residues. The interval 1–27 (MAMGSGGGAGSEQEDTVLFRRGTGQSD) is disordered. A P1 (binding site for GEMIN2) region spans residues 11–42 (SEQEDTVLFRRGTGQSDDSDIWDDTALIKAYD). The residue at position 23 (threonine 23) is a Phosphothreonine. A phosphoserine mark is found at serine 26 and serine 29. A Glycyl lysine isopeptide (Lys-Gly) (interchain with G-Cter in SUMO2) cross-link involves residue lysine 49. The disordered stretch occupies residues 55–88 (GDMCETSDKPKGTARRKPAKKNKNQKKNATAPLK). A compositionally biased stretch (basic residues) spans 66–80 (GTARRKPAKKNKNQK). Threonine 67 bears the Phosphothreonine mark. A Tudor domain is found at 89–149 (QWKAGDKCSA…LSPTCEVANN (61 aa)). The required for interaction with RPP20/POP7 stretch occupies residues 95–205 (KCSAVWSEDG…VPGAGLGPGK (111 aa)). The disordered stretch occupies residues 150-226 (TEQNTQENES…PPPPPPFLPC (77 aa)). Basic residues predominate over residues 171–181 (RSLRSKAHSKS). A Glycyl lysine isopeptide (Lys-Gly) (interchain with G-Cter in SUMO2) cross-link involves residue lysine 205. A compositionally biased stretch (pro residues) spans 212 to 226 (GPPPPPPPPPPFLPC). Residues 235-262 (PPIIPPPPPISPDCLDDTDALGSMLISW) form a P2 (binding site for SM B) region. Positions 274–289 (GFRQNKKEGKKCSHTN) are required for interaction with SYNCRIP.

Belongs to the SMN family. In terms of assembly, homooligomer; may form higher order homooligomers in the dimer to octamer range. Part of the core SMN complex that contains SMN1, GEMIN2/SIP1, DDX20/GEMIN3, GEMIN4, GEMIN5, GEMIN6, GEMIN7, GEMIN8 and STRAP/UNRIP. Part of the SMN-Sm complex that contains SMN1, GEMIN2/SIP1, DDX20/GEMIN3, GEMIN4, GEMIN5, GEMIN6, GEMIN7, GEMIN8, STRAP/UNRIP and the Sm proteins SNRPB, SNRPD1, SNRPD2, SNRPD3, SNRPE, SNRPF and SNRPG. Component of an import snRNP complex composed of KPNB1, RNUT1, SMN1 and ZNF259. Interacts with DDX20, FBL, NOLA1, RNUT1 and with several spliceosomal snRNP core Sm proteins, including SNRPB, SNRPD1, SNRPD2, SNRPD3, SNRPE and ILF3. Interacts with GEMIN2; the interaction is direct. Interacts with GEMIN3; the interaction is direct. Interacts with GEMIN8; the interaction is direct. Interacts with SNRPB; the interaction is direct. Interacts (via Tudor domain) with SNRPD1 (via C-terminus); the interaction is direct. Interacts with SNRPD2; the interaction is direct. Interacts (via Tudor domain) with SNRPD3 (via C-terminus); the interaction is direct. Interacts with SNRPE; the interaction is direct. Interacts with OSTF1, LSM10, LSM11 and RPP20/POP7. Interacts (via C-terminal region) with ZPR1 (via C-terminal region). Interacts (via Tudor domain) with COIL. Interacts with SETX; recruits SETX to POLR2A. Interacts with POLR2A (via the C-terminal domain (CTD)). Interacts with PRMT5. Interacts with XRN2. Interacts (via C-terminus) with FMR1 (via C-terminus); the interaction is direct and occurs in a RNA-independent manner. Interacts with SYNCRIP. Interacts (via Tudor domain) with SF3B2 (methylated form). Interacts with WRAP53/TCAB1. Interacts (via Tudor domain) with ELAVL4 in an RNA-independent manner; the interaction is required for localization of ELAVL4 to RNA granules. Interacts with FRG1.

It is found in the nucleus. The protein localises to the gem. It localises to the cajal body. The protein resides in the cytoplasm. Its subcellular location is the cytoplasmic granule. It is found in the perikaryon. The protein localises to the cell projection. It localises to the neuron projection. The protein resides in the axon. Its subcellular location is the myofibril. It is found in the sarcomere. The protein localises to the z line. Functionally, the SMN complex catalyzes the assembly of small nuclear ribonucleoproteins (snRNPs), the building blocks of the spliceosome, and thereby plays an important role in the splicing of cellular pre-mRNAs. Most spliceosomal snRNPs contain a common set of Sm proteins SNRPB, SNRPD1, SNRPD2, SNRPD3, SNRPE, SNRPF and SNRPG that assemble in a heptameric protein ring on the Sm site of the small nuclear RNA to form the core snRNP (Sm core). In the cytosol, the Sm proteins SNRPD1, SNRPD2, SNRPE, SNRPF and SNRPG are trapped in an inactive 6S pICln-Sm complex by the chaperone CLNS1A that controls the assembly of the core snRNP. To assemble core snRNPs, the SMN complex accepts the trapped 5Sm proteins from CLNS1A forming an intermediate. Binding of snRNA inside 5Sm ultimately triggers eviction of the SMN complex, thereby allowing binding of SNRPD3 and SNRPB to complete assembly of the core snRNP. Within the SMN complex, SMN1 acts as a structural backbone and together with GEMIN2 it gathers the Sm complex subunits. Ensures the correct splicing of U12 intron-containing genes that may be important for normal motor and proprioceptive neurons development. Also required for resolving RNA-DNA hybrids created by RNA polymerase II, that form R-loop in transcription terminal regions, an important step in proper transcription termination. May also play a role in the metabolism of small nucleolar ribonucleoprotein (snoRNPs). In Rattus norvegicus (Rat), this protein is Survival motor neuron protein (Smn1).